The chain runs to 268 residues: UPF0294 protein ETA_26410 (268 aa).

It belongs to the UPF0294 family.

It localises to the cytoplasm. The polypeptide is UPF0294 protein ETA_26410 (Erwinia tasmaniensis (strain DSM 17950 / CFBP 7177 / CIP 109463 / NCPPB 4357 / Et1/99)).